The chain runs to 59 residues: Potassium channel toxin alpha-KTx 16.4 (59 aa).

The N-terminal stretch at Met1–Ala22 is a signal peptide. Cystine bridges form between Cys30–Cys51, Cys36–Cys56, and Cys40–Cys58.

It belongs to the short scorpion toxin superfamily. Potassium channel inhibitor family. Alpha-KTx 16 subfamily. As to expression, expressed by the venom gland.

Its subcellular location is the secreted. Its function is as follows. Weak inhibitor of voltage-gated potassium channel hKv1.3/KCNA3. This chain is Potassium channel toxin alpha-KTx 16.4, found in Mesobuthus eupeus (Lesser Asian scorpion).